The sequence spans 234 residues: Homeobox protein ceh-51 (234 aa).

Disordered stretches follow at residues P128–F154 and Q209–S234. Residues R147 to K206 constitute a DNA-binding region (homeobox). Residues S220–S234 are compositionally biased toward basic and acidic residues.

Belongs to the NK-2 homeobox family.

The protein localises to the nucleus. Required for mesoderm development, including specification of muscle and coelomocyte precursors. The sequence is that of Homeobox protein ceh-51 from Caenorhabditis elegans.